A 536-amino-acid polypeptide reads, in one-letter code: Phosphoenolpyruvate carboxykinase (ATP) (536 aa).

Substrate contacts are provided by Arg-61, Tyr-195, and Lys-201. ATP-binding positions include Lys-201, His-220, and 236–244 (GLSGTGKTT). The Mn(2+) site is built by Lys-201 and His-220. Asp-257 is a binding site for Mn(2+). 3 residues coordinate ATP: Glu-285, Arg-322, and Thr-447. Arg-322 contributes to the substrate binding site.

It belongs to the phosphoenolpyruvate carboxykinase (ATP) family. Mn(2+) serves as cofactor.

Its subcellular location is the cytoplasm. It catalyses the reaction oxaloacetate + ATP = phosphoenolpyruvate + ADP + CO2. It functions in the pathway carbohydrate biosynthesis; gluconeogenesis. Its function is as follows. Involved in the gluconeogenesis. Catalyzes the conversion of oxaloacetate (OAA) to phosphoenolpyruvate (PEP) through direct phosphoryl transfer between the nucleoside triphosphate and OAA. The protein is Phosphoenolpyruvate carboxykinase (ATP) of Rhizobium meliloti (strain 1021) (Ensifer meliloti).